Reading from the N-terminus, the 969-residue chain is Proprotein convertase subtilisin/kexin type 6 (969 aa).

Residues 1 to 16 (MPPRAPPAPGPRPPPR) show a composition bias toward pro residues. A disordered region spans residues 1 to 39 (MPPRAPPAPGPRPPPRAAAATDTAAGAGGAGGAGGAGGP). A signal peptide spans 1–63 (MPPRAPPAPG…LLALPAACSA (63 aa)). Over residues 26-39 (GAGGAGGAGGAGGP) the composition is skewed to gly residues. Positions 64–149 (PPPRPVYTNH…QQEVKRRVKR (86 aa)) are excised as a propeptide. In terms of domain architecture, Peptidase S8 spans 168 to 487 (MWYLHCGDKN…FGLVDAEALV (320 aa)). Catalysis depends on charge relay system residues D205 and H246. N-linked (GlcNAc...) asparagine glycosylation occurs at N259. Catalysis depends on S420, which acts as the Charge relay system. The region spanning 495 to 635 (AVPSQHMCVA…SLILYGTAEH (141 aa)) is the P/Homo B domain. The short motif at 553–555 (RGD) is the Cell attachment site element. Residues 658-683 (EPPKAALSPSQVEVPEDEEDYTAQST) form a disordered region. 5 FU repeats span residues 692–739 (TSVC…GYFG), 743–790 (ARRC…GFYA), 794–838 (QKNC…GTYF), 842–887 (LIRC…GFYP), and 895–943 (HKVC…ETFC). Residues 695–930 (CHPECGDKGC…GFTQLGTSCI (236 aa)) form a CRM (Cys-rich motif) region. N-linked (GlcNAc...) asparagine glycosylation is found at N914 and N932. The region spanning 931–969 (TNHTCSNADETFCEMVKSNRLCERKLFIQFCCRTCLLAG) is the PLAC domain.

The protein belongs to the peptidase S8 family. In terms of assembly, the PACE4A-I precursor protein seems to exist in the reticulum endoplasmic as both a monomer and a dimer-sized complex whereas mature PACE4A-I exists only as a monomer, suggesting that propeptide cleavage affects its tertiary or quaternary structure. Interacts (immature form including the propeptide) with RCN3; probably involved in the maturation and the secretion of PCSK6. It depends on Ca(2+) as a cofactor. As to expression, each PACE4 isoform exhibits a unique restricted distribution. Isoform PACE4A-I is expressed in heart, brain, placenta, lung, skeletal muscle, kidney, pancreas, but at comparatively higher levels in the liver. Isoform PACE4A-II is at least expressed in placenta. Isoform PACE4B was only found in the embryonic kidney cell line from which it was isolated. Isoform PACE4C and isoform PACE4D are expressed in placenta. Isoform PACE4E-I is expressed in cerebellum, placenta and pituitary. Isoform PACE4E-II is at least present in cerebellum.

It localises to the secreted. The protein resides in the endoplasmic reticulum. It is found in the endomembrane system. Its function is as follows. Serine endoprotease that processes various proproteins by cleavage at paired basic amino acids, recognizing the RXXX[KR]R consensus motif. Likely functions in the constitutive secretory pathway, with unique restricted distribution in both neuroendocrine and non-neuroendocrine tissues. The protein is Proprotein convertase subtilisin/kexin type 6 (PCSK6) of Homo sapiens (Human).